The chain runs to 874 residues: Putative disease resistance protein At5g05400 (874 aa).

Residues 22–74 (LSRNQNRFRNLVDHVAALKKTVRQLEARRDDLLKRIKVQEDRGLNLLDEVQQW) adopt a coiled-coil conformation. Residues 139–434 (AQKGPIPKVE…GQGIILGSKG (296 aa)) form the NB-ARC domain. 182 to 189 (GMGGVGKT) contacts ATP. LRR repeat units lie at residues 483–505 (QKNV…EDQK), 506–527 (AVRR…LHCP), 528–548 (KLET…EFLS), 552–574 (ILMV…SPLY), 575–597 (SLRF…YALR), 598–620 (NLLY…HDLP), and 621–642 (NLEV…VRQI).

This sequence belongs to the disease resistance NB-LRR family.

Its function is as follows. Potential disease resistance protein. The polypeptide is Putative disease resistance protein At5g05400 (Arabidopsis thaliana (Mouse-ear cress)).